Consider the following 310-residue polypeptide: Thiamine-monophosphate kinase (310 aa).

Mg(2+) contacts are provided by Asp24, Thr38, and Asp39. Residue Asp46 participates in substrate binding. Residues Asp67 and Asp115 each coordinate Mg(2+). ATP is bound by residues 114 to 115 and Arg138; that span reads GD. Residue Asp203 participates in Mg(2+) binding. Ser205 contributes to the ATP binding site. Mg(2+) is bound at residue Asp206. Glu251 and Trp306 together coordinate substrate.

The protein belongs to the thiamine-monophosphate kinase family.

It catalyses the reaction thiamine phosphate + ATP = thiamine diphosphate + ADP. It functions in the pathway cofactor biosynthesis; thiamine diphosphate biosynthesis; thiamine diphosphate from thiamine phosphate: step 1/1. Functionally, catalyzes the ATP-dependent phosphorylation of thiamine-monophosphate (TMP) to form thiamine-pyrophosphate (TPP), the active form of vitamin B1. The sequence is that of Thiamine-monophosphate kinase from Nitrosopumilus maritimus (strain SCM1).